Here is a 272-residue protein sequence, read N- to C-terminus: Alcohol dehydrogenase-related 31 kDa protein (272 aa).

Tyrosine 11–leucine 34 lines the NAD(+) pocket. Substrate is bound at residue serine 139. Tyrosine 152 (proton acceptor) is an active-site residue.

It belongs to the short-chain dehydrogenases/reductases (SDR) family.

This is Alcohol dehydrogenase-related 31 kDa protein (Adhr) from Drosophila melanogaster (Fruit fly).